We begin with the raw amino-acid sequence, 419 residues long: Serine hydroxymethyltransferase (419 aa).

(6S)-5,6,7,8-tetrahydrofolate contacts are provided by residues L121 and 125 to 127; that span reads GHL. K230 bears the N6-(pyridoxal phosphate)lysine mark. Residue 355 to 357 participates in (6S)-5,6,7,8-tetrahydrofolate binding; the sequence is SPF.

The protein belongs to the SHMT family. As to quaternary structure, homodimer. Pyridoxal 5'-phosphate serves as cofactor.

It localises to the cytoplasm. It carries out the reaction (6R)-5,10-methylene-5,6,7,8-tetrahydrofolate + glycine + H2O = (6S)-5,6,7,8-tetrahydrofolate + L-serine. It functions in the pathway one-carbon metabolism; tetrahydrofolate interconversion. Its pathway is amino-acid biosynthesis; glycine biosynthesis; glycine from L-serine: step 1/1. Its function is as follows. Catalyzes the reversible interconversion of serine and glycine with tetrahydrofolate (THF) serving as the one-carbon carrier. This reaction serves as the major source of one-carbon groups required for the biosynthesis of purines, thymidylate, methionine, and other important biomolecules. Also exhibits THF-independent aldolase activity toward beta-hydroxyamino acids, producing glycine and aldehydes, via a retro-aldol mechanism. This chain is Serine hydroxymethyltransferase, found in Streptococcus equi subsp. equi (strain 4047).